The sequence spans 383 residues: S-adenosylmethionine synthase (383 aa).

H22 lines the ATP pocket. D24 contacts Mg(2+). E50 serves as a coordination point for K(+). Residues E63 and Q99 each coordinate L-methionine. The tract at residues 99–109 is flexible loop; that stretch reads QSLEINQAVLK. Residues 160–162, D235, 241–242, S258, and K262 contribute to the ATP site; these read DMK and RK. D235 is a binding site for L-methionine. L-methionine is bound at residue K266.

This sequence belongs to the AdoMet synthase family. As to quaternary structure, homotetramer; dimer of dimers. Mg(2+) is required as a cofactor. Requires K(+) as cofactor.

The protein resides in the cytoplasm. It carries out the reaction L-methionine + ATP + H2O = S-adenosyl-L-methionine + phosphate + diphosphate. Its pathway is amino-acid biosynthesis; S-adenosyl-L-methionine biosynthesis; S-adenosyl-L-methionine from L-methionine: step 1/1. In terms of biological role, catalyzes the formation of S-adenosylmethionine (AdoMet) from methionine and ATP. The overall synthetic reaction is composed of two sequential steps, AdoMet formation and the subsequent tripolyphosphate hydrolysis which occurs prior to release of AdoMet from the enzyme. The polypeptide is S-adenosylmethionine synthase (Mycoplasma genitalium (strain ATCC 33530 / DSM 19775 / NCTC 10195 / G37) (Mycoplasmoides genitalium)).